Here is a 159-residue protein sequence, read N- to C-terminus: MSEFTHFDESGRAIMVDVAGKDDTRRVATARGAIHMLPDTLGRILGGQAAKGDVLAVARIAAIQATKRTADLIPLCHPIALTRVVVDFAPETEVSRIVCTVTAETVGKTGVEMEALTGVSVALLTIYDMCKAVDRGMQIGDIQLVEKQGGRSGHWRLPD.

Substrate is bound by residues 75–77 and 113–114; these read LCH and ME. Asp-128 is an active-site residue.

The protein belongs to the MoaC family. As to quaternary structure, homohexamer; trimer of dimers.

The catalysed reaction is (8S)-3',8-cyclo-7,8-dihydroguanosine 5'-triphosphate = cyclic pyranopterin phosphate + diphosphate. It participates in cofactor biosynthesis; molybdopterin biosynthesis. Catalyzes the conversion of (8S)-3',8-cyclo-7,8-dihydroguanosine 5'-triphosphate to cyclic pyranopterin monophosphate (cPMP). The protein is Cyclic pyranopterin monophosphate synthase of Thiobacillus denitrificans (strain ATCC 25259 / T1).